Here is a 394-residue protein sequence, read N- to C-terminus: Elongation factor Tu 1 (394 aa).

The 195-residue stretch at 10-204 folds into the tr-type G domain; it reads KPHVNVGTIG…YLDSYIPEPE (195 aa). The segment at 19-26 is G1; it reads GHVDHGKT. GTP is bound at residue 19–26; it reads GHVDHGKT. A Mg(2+)-binding site is contributed by Thr26. Positions 60–64 are G2; the sequence is GITIN. The segment at 81-84 is G3; the sequence is DCPG. GTP is bound by residues 81–85 and 136–139; these read DCPGH and NKCD. The tract at residues 136-139 is G4; the sequence is NKCD. The interval 174–176 is G5; the sequence is SAL.

This sequence belongs to the TRAFAC class translation factor GTPase superfamily. Classic translation factor GTPase family. EF-Tu/EF-1A subfamily. As to quaternary structure, monomer.

It localises to the cytoplasm. The catalysed reaction is GTP + H2O = GDP + phosphate + H(+). GTP hydrolase that promotes the GTP-dependent binding of aminoacyl-tRNA to the A-site of ribosomes during protein biosynthesis. The sequence is that of Elongation factor Tu 1 from Serratia proteamaculans (strain 568).